Here is a 360-residue protein sequence, read N- to C-terminus: Vignain (360 aa).

The N-terminal stretch at 1-20 (MQKFILLALSLALVLAITES) is a signal peptide. Residues 21–124 (FDFHEKELES…NGTFMYEKVD (104 aa)) constitute a propeptide, activation peptide. Asn-115 carries N-linked (GlcNAc...) asparagine glycosylation. 3 cysteine pairs are disulfide-bonded: Cys-147-Cys-189, Cys-181-Cys-222, and Cys-280-Cys-332. Residue Cys-150 is part of the active site. Residues His-286 and Asn-307 contribute to the active site. Positions 341-360 (PIKKSSNNPSGIKSSPKDEL) are disordered. The segment covering 344–353 (KSSNNPSGIK) has biased composition (polar residues). The propeptide at 354–360 (SSPKDEL) is removed in mature form. The segment at 357–360 (KDEL) is prevents secretion from ER.

Belongs to the peptidase C1 family. Post-translationally, the potential N-glycosylation site at Asn-115 is not glycosylated.

Its subcellular location is the cytoplasmic vesicle. Low pH triggers activation of the protease and removal of the propeptide and the KDEL motif. Its function is as follows. Involved in programmed cell death. Shows a pronounced preference for hydrophobic residues in the P2 position and no obvious preference in the P1 position of the cleavage site. Accepts proline at the P1 and P1' positions. This chain is Vignain (CYSEP), found in Ricinus communis (Castor bean).